A 121-amino-acid chain; its full sequence is Putative membrane protein insertion efficiency factor (121 aa).

The tract at residues 97–121 (VPARRDRHAGGRRCCPANVDEQRST) is disordered.

The protein belongs to the UPF0161 family.

The protein localises to the cell membrane. Its function is as follows. Could be involved in insertion of integral membrane proteins into the membrane. This chain is Putative membrane protein insertion efficiency factor, found in Rhodococcus jostii (strain RHA1).